The following is a 590-amino-acid chain: Shugoshin (590 aa).

Positions 1 to 20 are disordered; sequence MPKRKIAPNKESSRRTVSHD. Over residues 11–20 the composition is skewed to basic and acidic residues; that stretch reads ESSRRTVSHD. The stretch at 25–86 forms a coiled coil; it reads QIQEFQNLMD…QENVTLRSKT (62 aa). Disordered regions lie at residues 133–235, 291–337, and 411–550; these read LRTM…QVEE, PSNP…HSMK, and RNRE…NSNI. Positions 173–185 are enriched in basic and acidic residues; it reads SFNKDDGPDLEPK. The span at 302 to 326 shows a compositional bias: low complexity; that stretch reads PSATLPTTTSDASTVYPSSSSSTNS. Basic residues predominate over residues 328–337; sequence PKTKIKHSMK. Residues 448–459 are compositionally biased toward basic and acidic residues; that stretch reads KKTEDEIHEDTA. Residues 513 to 526 show a composition bias toward polar residues; it reads IVNNLSDENSTTRP. Positions 527–550 are enriched in low complexity; that stretch reads SKSSKGTSNNNNNYNNFDNNNSNI.

This sequence belongs to the shugoshin family. Ubiquitinated by the anaphase promoting complex (APC) at the onset of anaphase, conducting to its degradation.

Its subcellular location is the chromosome. The protein localises to the centromere. It localises to the kinetochore. It is found in the cytoplasm. The protein resides in the cytoskeleton. Its subcellular location is the spindle pole. Its function is as follows. Plays a central role in chromosome cohesion during mitosis and meiosis divisions by preventing premature dissociation of cohesin complex from centromeres after prophase, when most of cohesin complex dissociates from chromosomes arms. Probably act by protecting REC8 and RAD21 from separase degradation during anaphase. Also acts as a spindle checkpoint component required for sensing tension between sister chromatids during mitosis, its degradation when they separate preventing cell cycle arrest and chromosome loss in anaphase, a time when sister chromatids are no longer under tension. This Saccharomyces cerevisiae (strain ATCC 204508 / S288c) (Baker's yeast) protein is Shugoshin (SGO1).